The primary structure comprises 178 residues: Protein-export protein SecB (178 aa).

The segment covering M1–M13 has biased composition (acidic residues). The tract at residues M1–R25 is disordered.

It belongs to the SecB family. As to quaternary structure, homotetramer, a dimer of dimers. One homotetramer interacts with 1 SecA dimer.

It localises to the cytoplasm. Functionally, one of the proteins required for the normal export of preproteins out of the cell cytoplasm. It is a molecular chaperone that binds to a subset of precursor proteins, maintaining them in a translocation-competent state. It also specifically binds to its receptor SecA. The sequence is that of Protein-export protein SecB from Erythrobacter litoralis (strain HTCC2594).